A 394-amino-acid chain; its full sequence is MALVRWGLRRQNFHLLRRRRVLLLKLTVVVISVLLFCEYFIYYLVLFRCHWPEVKMPARGGRQEPVLKAMFLADTHLLGEIRGHWLDKLRREWQMERAFQTALWLLQPEVVFILGDVFDEGKWSSAQAWADDLHRFQRMFRHGSHVQLKVVIGNHDIGFHYQMSKYRINRFEKVFGSERLFSLKGVNFVMVNSVAMEGDGCTICSEAEAELREISRKLNCSQEQVQGSSQCDHEPRLPLSAPVLLQHYPLYRASDANCSGEDAAPPEERSVPFEEKYDVLSREASQKLLWWLRPRLILSGHTHSACEVLHPGGAPEVSVPSFSWRNRNNPSFIMGSLTSRDYALSKCYLPCEDTVLTTYCAAAAFLLVLILAHFERLPSSFLFGWKLCRSHLRR.

A helical transmembrane segment spans residues Thr-27–Phe-47. A divalent metal cation contacts are provided by Asp-74, Asp-116, Asn-154, His-247, His-301, and His-303. A helical transmembrane segment spans residues Thr-354–Phe-374.

It belongs to the metallophosphoesterase superfamily. MPPE1 family. As to quaternary structure, interacts with GPI-anchor proteins (via the GPI portion). Interacts with TMED10. Mn(2+) is required as a cofactor.

The protein localises to the endoplasmic reticulum-Golgi intermediate compartment membrane. Metallophosphoesterase that catalyzes the removal of a side-chain ethanolamine-phosphate (EtNP) from the second mannose of the GPI-anchor protein intermediate. Participates in the glycan remodeling steps of GPI-anchor maturation to allow an efficient transport of GPI-anchor proteins from the endoplasmic reticulum to the Golgi. This is Metallophosphoesterase 1 from Rattus norvegicus (Rat).